The chain runs to 580 residues: Serine/threonine-protein kinase PINK1, mitochondrial (580 aa).

The transit peptide at 1–77 directs the protein to the mitochondrion; that stretch reads MAVRQALGRG…RFFRQSVAGL (77 aa). The disordered stretch occupies residues 28–60; the sequence is VSGWGKPGPGAAWGRGERPGRVSSPGAQPRPLG. The helical transmembrane segment at 94–110 threads the bilayer; the sequence is GPCGRAVFLAFGLGLGL. Positions 111–117 are required for outer membrane localization; the sequence is IEEKQAE. The region spanning 156–510 is the Protein kinase domain; the sequence is YLIGQAIGKG…IAANVLHLSL (355 aa). Residues 162 to 170 and lysine 218 each bind ATP; that span reads IGKGCNAAV. Serine 227 carries the post-translational modification Phosphoserine; by autocatalysis. Aspartate 361 acts as the Proton acceptor in catalysis. At serine 401 the chain carries Phosphoserine; by autocatalysis.

The protein belongs to the protein kinase superfamily. Ser/Thr protein kinase family. Upon mitochondrial depolarization, it forms a supercomplex with TOM and TIM23 complexes. PINK1-TOM-TIM23 supercomplex formation requires PINK1 interaction with TOMM20 and TOMM70 and is critical for PINK1 stabilization at the outer mitochondrial membrane, kinase activation and downstream mitophagy. Upon mitochondrial depolarization, interacts with TIMM23; the interaction is required for PINK1 accumulation at the outer mitochondrial membrane, kinase activation by autophosphorylation and PRKN recruitement to mitochondria. Interacts with PRKN. Interacts with FBXO7. Forms a complex with PRKN and PARK7. Interacts with NENF. It depends on Mg(2+) as a cofactor. Proteolytically cleaved. In healthy cells, the precursor is continuously imported into the inner mitochondrial membrane (IMM), where it is proteolytically cleaved by mitochondrial-processing peptidase (MPP) and then undergoes further proteolytic cleavage by PARL or AFG3L2 to give rise to the 52 kDa short form. The 52 kDa short form is then released into the cytosol where it rapidly undergoes proteasome-dependent degradation. In unhealthy cells, when cellular stress conditions lead to the loss of mitochondrial membrane potential, mitochondrial import is impaired leading to the precursor accumulating on the outer mitochondrial membrane (OMM). If accumulation at the OMM fails and it is imported into the depolarized mitochondria, it undergoes cleavage by the IMM protease OMA1, promoting its subsequent degradation by the proteasome. Post-translationally, autophosphorylated. Loss of mitochondrial membrane potential results in the precursor accumulating on the outer mitochondrial membrane (OMM) where it is activated by autophosphorylation. Autophosphorylation at Ser-227 and Ser-401 is sufficient and essential for selective recruitment of PRKN to depolarized mitochondria, via PINK1-dependent phosphorylation of ubiquitin and maybe PRKN.

It localises to the mitochondrion outer membrane. It is found in the mitochondrion inner membrane. The protein localises to the cytoplasm. The protein resides in the cytosol. The catalysed reaction is L-seryl-[protein] + ATP = O-phospho-L-seryl-[protein] + ADP + H(+). It carries out the reaction L-threonyl-[protein] + ATP = O-phospho-L-threonyl-[protein] + ADP + H(+). Serine/threonine-protein kinase which acts as a sensor of mitochondrial damage and protects against mitochondrial dysfunction during cellular stress. It phosphorylates mitochondrial proteins to coordinate mitochondrial quality control mechanisms that remove and replace dysfunctional mitochondrial components. Depending on the severity of mitochondrial damage, activity ranges from preventing apoptosis and stimulating mitochondrial biogenesis to eliminating severely damaged mitochondria via PINK1-PRKN-dependent mitophagy. When cellular stress results in irreversible mitochondrial damage, PINK1 accumulates at the outer mitochondrial membrane (OMM) where it phosphorylates pre-existing polyubiquitin chains at 'Ser-65', recruits PRKN from the cytosol to the OMM and activates PRKN by phosphorylation at 'Ser-65'; activated PRKN then ubiquinates VDAC1 and other OMM proteins to initiate mitophagy. The PINK1-PRKN pathway also promotes fission of damaged mitochondria through phosphorylation and PRKN-dependent degradation of mitochondrial proteins involved in fission such as MFN2. This prevents the refusion of unhealthy mitochondria with the mitochondrial network or initiates mitochondrial fragmentation facilitating their later engulfment by autophagosomes. Also promotes mitochondrial fission independently of PRKN and ATG7-mediated mitophagy, via the phosphorylation and activation of DNM1L. Regulates motility of damaged mitochondria by promoting the ubiquitination and subsequent degradation of MIRO1 and MIRO2; in motor neurons, this likely inhibits mitochondrial intracellular anterograde transport along the axons which probably increases the chance of the mitochondria undergoing mitophagy in the soma. Required for ubiquinone reduction by mitochondrial complex I by mediating phosphorylation of complex I subunit NDUFA10. Phosphorylates LETM1, positively regulating its mitochondrial calcium transport activity. This is Serine/threonine-protein kinase PINK1, mitochondrial from Rattus norvegicus (Rat).